The chain runs to 422 residues: Enolase (422 aa).

(2R)-2-phosphoglycerate is bound at residue glutamine 161. The active-site Proton donor is glutamate 203. Mg(2+) contacts are provided by aspartate 240, glutamate 283, and aspartate 310. 4 residues coordinate (2R)-2-phosphoglycerate: lysine 335, arginine 364, serine 365, and lysine 386. Lysine 335 serves as the catalytic Proton acceptor.

The protein belongs to the enolase family. Mg(2+) is required as a cofactor.

The protein resides in the cytoplasm. Its subcellular location is the secreted. It is found in the cell surface. It catalyses the reaction (2R)-2-phosphoglycerate = phosphoenolpyruvate + H2O. It participates in carbohydrate degradation; glycolysis; pyruvate from D-glyceraldehyde 3-phosphate: step 4/5. Its function is as follows. Catalyzes the reversible conversion of 2-phosphoglycerate (2-PG) into phosphoenolpyruvate (PEP). It is essential for the degradation of carbohydrates via glycolysis. This chain is Enolase, found in Deinococcus geothermalis (strain DSM 11300 / CIP 105573 / AG-3a).